A 343-amino-acid chain; its full sequence is uncharacterized protein (343 aa).

The next 11 membrane-spanning stretches (helical) occupy residues 13-33, 44-64, 71-91, 121-141, 148-168, 177-197, 203-223, 244-264, 269-289, 296-316, and 320-340; these read VILY…SMCG, LWGY…ATLD, MHPV…LFFI, ILLL…LTGL, NASL…YLIF, FLGI…GDFS, VAVT…LDTV, VGGF…ELPL, YALG…YIAI, MVGA…FIIL, and FSIM…ILYW. EamA domains lie at 55–192 and 216–340; these read IFFG…YLLT and FFWS…ILYW.

It belongs to the EamA transporter family.

It localises to the cell membrane. This is an uncharacterized protein from Methanothermobacter thermautotrophicus (strain ATCC 29096 / DSM 1053 / JCM 10044 / NBRC 100330 / Delta H) (Methanobacterium thermoautotrophicum).